Here is a 524-residue protein sequence, read N- to C-terminus: N-acetylgalactosamine-6-sulfatase (524 aa).

Positions 1-27 (MTACSTAIRAQQLLLPVLSALGLLAAG) are cleaved as a signal peptide. The interval 28 to 381 (APQPPNIVLL…PTMLQGHIID (354 aa)) is catalytic domain. Positions 40, 41, and 80 each coordinate Ca(2+). C80 serves as the catalytic Nucleophile. C80 carries the 3-oxoalanine (Cys) modification. Residue H143 is part of the active site. The N-linked (GlcNAc...) asparagine glycan is linked to N205. Residues D290 and N291 each coordinate Ca(2+). C310 and C421 form a disulfide bridge. An N-linked (GlcNAc...) asparagine glycan is attached at N425. 2 disulfide bridges follow: C491–C520 and C503–C509.

This sequence belongs to the sulfatase family. In terms of assembly, homodimer. Ca(2+) is required as a cofactor. The conversion to 3-oxoalanine (also known as C-formylglycine, FGly), of a serine or cysteine residue in prokaryotes and of a cysteine residue in eukaryotes, is critical for catalytic activity.

Its subcellular location is the lysosome. It catalyses the reaction Hydrolysis of the 6-sulfate groups of the N-acetyl-D-galactosamine 6-sulfate units of chondroitin sulfate and of the D-galactose 6-sulfate units of keratan sulfate.. The protein is N-acetylgalactosamine-6-sulfatase (Galns) of Rattus norvegicus (Rat).